The following is a 166-amino-acid chain: Protein C (166 aa).

The tract at residues 17–42 is disordered; that stretch reads YKRHTDDQASNNQVPKTGQEHGRTSC.

Functionally, may counteract the cellular interferon antiviral system. The chain is Protein C (P/V/C) from Hendra virus (isolate Horse/Autralia/Hendra/1994).